Reading from the N-terminus, the 22-residue chain is Dioicin-1 (22 aa).

The protein localises to the secreted. Its subcellular location is the extracellular space. It localises to the golgi apparatus. It is found in the vacuole. The catalysed reaction is Endohydrolysis of the N-glycosidic bond at one specific adenosine on the 28S rRNA.. In terms of biological role, nicks pBR322 dsDNA. Has adenine polynucleotide glycosidase activity on herring sperm ssDNA. This chain is Dioicin-1, found in Phytolacca dioica (Bella sombra tree).